The sequence spans 267 residues: 5'-nucleotidase SurE (267 aa).

A divalent metal cation is bound by residues D9, D10, S40, and N97.

Belongs to the SurE nucleotidase family. It depends on a divalent metal cation as a cofactor.

It localises to the cytoplasm. It catalyses the reaction a ribonucleoside 5'-phosphate + H2O = a ribonucleoside + phosphate. Its function is as follows. Nucleotidase that shows phosphatase activity on nucleoside 5'-monophosphates. In Helicobacter pylori (strain J99 / ATCC 700824) (Campylobacter pylori J99), this protein is 5'-nucleotidase SurE.